Here is a 106-residue protein sequence, read N- to C-terminus: BLOC-1-related complex subunit 7 (106 aa).

It belongs to the BORCS7 family. As to quaternary structure, component of the BLOC-one-related complex (BORC) which is composed of BLOC1S1, BLOC1S2, BORCS5, BORCS6, BORCS7, BORCS8, KXD1 and SNAPIN.

Its subcellular location is the lysosome membrane. Its function is as follows. As part of the BORC complex may play a role in lysosomes movement and localization at the cell periphery. Associated with the cytosolic face of lysosomes, the BORC complex may recruit ARL8B and couple lysosomes to microtubule plus-end-directed kinesin motor. The polypeptide is BLOC-1-related complex subunit 7 (Pongo abelii (Sumatran orangutan)).